Reading from the N-terminus, the 805-residue chain is Nitrite reductase [NAD(P)H] (805 aa).

Residue Y43–N79 coordinates FAD. Residue L193 to R223 participates in NADP(+) binding. 4 residues coordinate [2Fe-2S] cluster: C418, C420, C453, and C456. Residues C635, C641, C675, and C679 each contribute to the [4Fe-4S] cluster site. C679 lines the siroheme pocket.

Belongs to the nitrite and sulfite reductase 4Fe-4S domain family. Homodimer. Siroheme serves as cofactor. Requires [2Fe-2S] cluster as cofactor. The cofactor is [4Fe-4S] cluster. FAD is required as a cofactor.

The enzyme catalyses NH4(+) + 3 NADP(+) + 2 H2O = nitrite + 3 NADPH + 5 H(+). The catalysed reaction is NH4(+) + 3 NAD(+) + 2 H2O = nitrite + 3 NADH + 5 H(+). It functions in the pathway nitrogen metabolism; nitrate reduction (assimilation). Required for nitrite assimilation. This Bacillus subtilis (strain 168) protein is Nitrite reductase [NAD(P)H] (nasD).